Reading from the N-terminus, the 151-residue chain is UPF0178 protein Pfl01_5469 (151 aa).

It belongs to the UPF0178 family.

The protein is UPF0178 protein Pfl01_5469 of Pseudomonas fluorescens (strain Pf0-1).